A 248-amino-acid chain; its full sequence is NADP-dependent 3-hydroxy acid dehydrogenase YdfG (248 aa).

NADP(+)-binding positions include 7-12 (GATAGF), 32-33 (RR), 54-55 (DV), and N81. Residue S134 coordinates substrate. Residues Y147, K151, and 177–185 (PGLVGGTEF) each bind NADP(+). The active-site Proton acceptor is the Y147.

It belongs to the short-chain dehydrogenases/reductases (SDR) family. Homotetramer.

It carries out the reaction 3-hydroxypropanoate + NADP(+) = 3-oxopropanoate + NADPH + H(+). The catalysed reaction is L-allo-threonine + NADP(+) = aminoacetone + CO2 + NADPH. In terms of biological role, NADP-dependent dehydrogenase with broad substrate specificity acting on 3-hydroxy acids. Catalyzes the NADP-dependent oxidation of L-allo-threonine to L-2-amino-3-keto-butyrate, which is spontaneously decarboxylated into aminoacetone. Also acts on D-threonine, L-serine, D-serine, D-3-hydroxyisobutyrate, L-3-hydroxyisobutyrate, D-glycerate and L-glycerate. Able to catalyze the reduction of the malonic semialdehyde to 3-hydroxypropionic acid. YdfG is apparently supplementing RutE, the presumed malonic semialdehyde reductase involved in pyrimidine degradation since both are able to detoxify malonic semialdehyde. The chain is NADP-dependent 3-hydroxy acid dehydrogenase YdfG from Escherichia coli O157:H7.